The sequence spans 141 residues: Thioredoxin-like protein SkfH (141 aa).

Positions 2-141 (KDEQMLTEWP…DKMLKKIAGL (140 aa)) constitute a Thioredoxin domain. C41 and C44 are joined by a disulfide.

Functionally, required for production of the bacteriocin SkfA. This chain is Thioredoxin-like protein SkfH, found in Bacillus subtilis (strain 168).